A 248-amino-acid chain; its full sequence is Triosephosphate isomerase (248 aa).

Substrate is bound at residue 9–11 (NWK). His-95 functions as the Electrophile in the catalytic mechanism. Residue Glu-166 is the Proton acceptor of the active site. Residues Gly-172, Ser-210, and 231-232 (GG) contribute to the substrate site.

It belongs to the triosephosphate isomerase family. In terms of assembly, homodimer.

The protein localises to the cytoplasm. The enzyme catalyses D-glyceraldehyde 3-phosphate = dihydroxyacetone phosphate. It participates in carbohydrate biosynthesis; gluconeogenesis. Its pathway is carbohydrate degradation; glycolysis; D-glyceraldehyde 3-phosphate from glycerone phosphate: step 1/1. Its function is as follows. Involved in the gluconeogenesis. Catalyzes stereospecifically the conversion of dihydroxyacetone phosphate (DHAP) to D-glyceraldehyde-3-phosphate (G3P). This is Triosephosphate isomerase from Delftia acidovorans (strain DSM 14801 / SPH-1).